A 459-amino-acid polypeptide reads, in one-letter code: uncharacterized protein (459 aa).

The region spanning 9–67 (KLEVGQTFPVTIKRLGINGEGVGYFKRQVVFIPGALPGEEVVAETTKIQRGFAEAKVKK) is the TRAM domain. Positions 80, 86, 89, and 168 each coordinate [4Fe-4S] cluster. S-adenosyl-L-methionine contacts are provided by glutamine 292, tyrosine 321, aspartate 342, and aspartate 390. Residue cysteine 417 is the Nucleophile of the active site.

It belongs to the class I-like SAM-binding methyltransferase superfamily. RNA M5U methyltransferase family.

This is an uncharacterized protein from Bacillus anthracis.